Here is a 339-residue protein sequence, read N- to C-terminus: UDP-3-O-acylglucosamine N-acyltransferase (339 aa).

His239 serves as the catalytic Proton acceptor.

This sequence belongs to the transferase hexapeptide repeat family. LpxD subfamily. As to quaternary structure, homotrimer.

It catalyses the reaction a UDP-3-O-[(3R)-3-hydroxyacyl]-alpha-D-glucosamine + a (3R)-hydroxyacyl-[ACP] = a UDP-2-N,3-O-bis[(3R)-3-hydroxyacyl]-alpha-D-glucosamine + holo-[ACP] + H(+). The protein operates within bacterial outer membrane biogenesis; LPS lipid A biosynthesis. In terms of biological role, catalyzes the N-acylation of UDP-3-O-acylglucosamine using 3-hydroxyacyl-ACP as the acyl donor. Is involved in the biosynthesis of lipid A, a phosphorylated glycolipid that anchors the lipopolysaccharide to the outer membrane of the cell. This chain is UDP-3-O-acylglucosamine N-acyltransferase, found in Aliivibrio fischeri (strain ATCC 700601 / ES114) (Vibrio fischeri).